Consider the following 526-residue polypeptide: ATP synthase subunit alpha (526 aa).

171–178 (GDRQTGKT) is an ATP binding site.

The protein belongs to the ATPase alpha/beta chains family. In terms of assembly, F-type ATPases have 2 components, CF(1) - the catalytic core - and CF(0) - the membrane proton channel. CF(1) has five subunits: alpha(3), beta(3), gamma(1), delta(1), epsilon(1). CF(0) has three main subunits: a(1), b(2) and c(9-12). The alpha and beta chains form an alternating ring which encloses part of the gamma chain. CF(1) is attached to CF(0) by a central stalk formed by the gamma and epsilon chains, while a peripheral stalk is formed by the delta and b chains.

The protein localises to the cell membrane. The enzyme catalyses ATP + H2O + 4 H(+)(in) = ADP + phosphate + 5 H(+)(out). In terms of biological role, produces ATP from ADP in the presence of a proton gradient across the membrane. The alpha chain is a regulatory subunit. The sequence is that of ATP synthase subunit alpha from Christiangramia forsetii (strain DSM 17595 / CGMCC 1.15422 / KT0803) (Gramella forsetii).